Here is a 153-residue protein sequence, read N- to C-terminus: Large ribosomal subunit protein uL30 (153 aa).

This sequence belongs to the universal ribosomal protein uL30 family. In terms of assembly, part of the 50S ribosomal subunit.

This chain is Large ribosomal subunit protein uL30, found in Metallosphaera sedula (strain ATCC 51363 / DSM 5348 / JCM 9185 / NBRC 15509 / TH2).